Here is a 429-residue protein sequence, read N- to C-terminus: 3-phosphoshikimate 1-carboxyvinyltransferase (429 aa).

Residues lysine 20, serine 21, and arginine 25 each coordinate 3-phosphoshikimate. Lysine 20 is a binding site for phosphoenolpyruvate. 2 residues coordinate phosphoenolpyruvate: glycine 89 and arginine 118. Positions 164, 165, 166, 192, 311, and 338 each coordinate 3-phosphoshikimate. A phosphoenolpyruvate-binding site is contributed by glutamine 166. Aspartate 311 serves as the catalytic Proton acceptor. 2 residues coordinate phosphoenolpyruvate: arginine 342 and arginine 384.

The protein belongs to the EPSP synthase family. Monomer.

It is found in the cytoplasm. The catalysed reaction is 3-phosphoshikimate + phosphoenolpyruvate = 5-O-(1-carboxyvinyl)-3-phosphoshikimate + phosphate. It participates in metabolic intermediate biosynthesis; chorismate biosynthesis. Functionally, catalyzes the transfer of the enolpyruvyl moiety of phosphoenolpyruvate (PEP) to the 5-hydroxyl of shikimate-3-phosphate (S3P) to produce enolpyruvyl shikimate-3-phosphate and inorganic phosphate. The polypeptide is 3-phosphoshikimate 1-carboxyvinyltransferase (Methanococcus maripaludis (strain DSM 14266 / JCM 13030 / NBRC 101832 / S2 / LL)).